Here is a 578-residue protein sequence, read N- to C-terminus: Lysine--tRNA ligase (578 aa).

Mg(2+) contacts are provided by glutamate 414 and glutamate 421.

The protein belongs to the class-II aminoacyl-tRNA synthetase family. Homodimer. Requires Mg(2+) as cofactor.

It is found in the cytoplasm. The catalysed reaction is tRNA(Lys) + L-lysine + ATP = L-lysyl-tRNA(Lys) + AMP + diphosphate. In Porphyromonas gingivalis (strain ATCC 33277 / DSM 20709 / CIP 103683 / JCM 12257 / NCTC 11834 / 2561), this protein is Lysine--tRNA ligase.